A 263-amino-acid polypeptide reads, in one-letter code: Nicotinamide riboside transporter PnuC (263 aa).

Residues 1-40 (MQYGMDSFGLRGIPHQVFIKKKEGKIMSLAWWKRELFGGW) lie on the Cytoplasmic side of the membrane. A helical membrane pass occupies residues 41–61 (THFEAVWLLMFLGIQAVVFVF). N62 is a topological domain (periplasmic). Residues 63 to 83 (PDSWLASVAAVTGILCVVFVG) traverse the membrane as a helical segment. Topologically, residues 84–86 (KGK) are cytoplasmic. A helical membrane pass occupies residues 87–107 (ISNYLFGLISVSLYAYVSYTF). Topologically, residues 108 to 109 (KL) are periplasmic. The chain crosses the membrane as a helical span at residues 110 to 131 (YGEMMLNLLVYVPVQFVGFAMW). Residue Q124 coordinates beta-nicotinamide D-riboside. The Cytoplasmic portion of the chain corresponds to 132–155 (RKHMALGETAETEEVKAKALTVRQ). A helical membrane pass occupies residues 156–177 (WLLVVAASVVGTSVYIEWLHHL). Topologically, residues 178–180 (GSA) are periplasmic. The helical transmembrane segment at 181–201 (LPTLDGVTVVVSIVAQVLMIL) threads the bilayer. Beta-nicotinamide D-riboside is bound at residue Q196. Residues 202–205 (RYRE) lie on the Cytoplasmic side of the membrane. Residues 206–226 (QWALWIVVNILTISLWAVAWF) traverse the membrane as a helical segment. Beta-nicotinamide D-riboside is bound by residues W210 and N214. Residues 227–232 (KNGETS) are Periplasmic-facing. A helical membrane pass occupies residues 233-253 (LPLLLMYVMYLCNSVYGYINW). Y242 contributes to the beta-nicotinamide D-riboside binding site. The Cytoplasmic portion of the chain corresponds to 254-263 (TKLVKRHSGQ).

The protein belongs to the nicotinamide ribonucleoside (NR) uptake permease (TC 4.B.1) family. Homotrimer.

It localises to the cell inner membrane. In terms of biological role, required for nicotinamide riboside transport across the inner membrane. This chain is Nicotinamide riboside transporter PnuC, found in Neisseria mucosa (strain ATCC 25996 / DSM 4631 / NCTC 10774 / M26).